The primary structure comprises 90 residues: Probable Fe(2+)-trafficking protein (90 aa).

The protein belongs to the Fe(2+)-trafficking protein family.

Its function is as follows. Could be a mediator in iron transactions between iron acquisition and iron-requiring processes, such as synthesis and/or repair of Fe-S clusters in biosynthetic enzymes. The polypeptide is Probable Fe(2+)-trafficking protein (Laribacter hongkongensis (strain HLHK9)).